Reading from the N-terminus, the 530-residue chain is MGSVGSQRLEEPSVAGTPDPGVVMSFTFDSHQLEEAAEAAQGQGLRARGVPAFTDTTLDEPVPDDRYHAIYFAMLLAGVGFLLPYNSFITDVDYLHHKYPGTSIVFDMSLTYILVALAAVLLNNVLVERLTLHTRITAGYLLALGPLLFISICDVWLQLFSRDQAYAINLAAVGTVAFGCTVQQSSFYGYTGMLPKRYTQGVMTGESTAGVMISLSRILTKLLLPDERASTLIFFLVSVALELLCFLLHLLVRRSRFVLFYTTRPRDSHRGRPGLGRGYGYRVHHDVVAGDVHFEHPAPALAPNESPKDSPAHEVTGSGGAYMRFDVPRPRVQRSWPTFRALLLHRYVVARVIWADMLSIAVTYFITLCLFPGLESEIRHCILGEWLPILIMAVFNLSDFVGKILAALPVDWRGTHLLACSCLRVVFIPLFILCVYPSGMPALRHPAWPCIFSLLMGISNGYFGSVPMILAAGKVSPKQRELAGNTMTVSYMSGLTLGSAVAYCTYSLTRDAHGSCLHASTANGSILAGL.

The disordered stretch occupies residues 1–21 (MGSVGSQRLEEPSVAGTPDPG). Topologically, residues 1-68 (MGSVGSQRLE…DEPVPDDRYH (68 aa)) are extracellular. A helical transmembrane segment spans residues 69 to 89 (AIYFAMLLAGVGFLLPYNSFI). Residues 90–101 (TDVDYLHHKYPG) lie on the Cytoplasmic side of the membrane. A helical transmembrane segment spans residues 102–122 (TSIVFDMSLTYILVALAAVLL). Residues 123–139 (NNVLVERLTLHTRITAG) lie on the Extracellular side of the membrane. A helical transmembrane segment spans residues 140 to 160 (YLLALGPLLFISICDVWLQLF). At 161-166 (SRDQAY) the chain is on the cytoplasmic side. Residues 167–187 (AINLAAVGTVAFGCTVQQSSF) traverse the membrane as a helical segment. Residues 188–231 (YGYTGMLPKRYTQGVMTGESTAGVMISLSRILTKLLLPDERAST) are Extracellular-facing. Residues 232-252 (LIFFLVSVALELLCFLLHLLV) traverse the membrane as a helical segment. Residues 253-351 (RRSRFVLFYT…LLLHRYVVAR (99 aa)) are Cytoplasmic-facing. Residues 352–372 (VIWADMLSIAVTYFITLCLFP) form a helical membrane-spanning segment. Residues 373-381 (GLESEIRHC) lie on the Extracellular side of the membrane. A helical membrane pass occupies residues 382-402 (ILGEWLPILIMAVFNLSDFVG). Over 403 to 416 (KILAALPVDWRGTH) the chain is Cytoplasmic. A helical transmembrane segment spans residues 417–437 (LLACSCLRVVFIPLFILCVYP). At 438–450 (SGMPALRHPAWPC) the chain is on the extracellular side. A helical membrane pass occupies residues 451–471 (IFSLLMGISNGYFGSVPMILA). The Cytoplasmic portion of the chain corresponds to 472–486 (AGKVSPKQRELAGNT). The chain crosses the membrane as a helical span at residues 487–509 (MTVSYMSGLTLGSAVAYCTYSLT). Over 510 to 530 (RDAHGSCLHASTANGSILAGL) the chain is Extracellular. N-linked (GlcNAc...) asparagine glycosylation is present at N523.

The protein belongs to the SLC29A/ENT transporter (TC 2.A.57) family. N-glycosylated. Mainly expressed in brain and skeletal muscle. In brain, expressed in cerebellum, cerebral cortex, medulla oblongata, occipital pole, frontal and temporal lobes putamen, spinal cord, substancia nigra, hippocampus, caudate nucleus, nucleus accumbens, pons and choroid plexus. Expressed in heart, in both cardiomyocytes and vascular endothelial cells. Also expressed in adrenal gland, small intestine, pancreas, kidney, liver, bone marrow, lymph node. Located in endometrial stroma, where the expression is high in the proliferative phase, decreases during the secretory phase, and is no longer detectable in the menstrual phase.

It localises to the cell membrane. The protein resides in the apical cell membrane. It catalyses the reaction serotonin(out) = serotonin(in). It carries out the reaction dopamine(out) = dopamine(in). The catalysed reaction is (R)-noradrenaline(out) = (R)-noradrenaline(in). The enzyme catalyses (R)-adrenaline(out) = (R)-adrenaline(in). It catalyses the reaction histamine(out) = histamine(in). It carries out the reaction tyramine(in) = tyramine(out). The catalysed reaction is guanidine(out) = guanidine(in). The enzyme catalyses adenosine(in) = adenosine(out). Its activity is regulated as follows. Activated at acidic pH. Functionally, electrogenic voltage-dependent transporter that mediates the transport of a variety of endogenous bioactive amines, cationic xenobiotics and drugs. Utilizes the physiologic inside-negative membrane potential as a driving force to facilitate cellular uptake of organic cations. Functions as a Na(+)- and Cl(-)-independent bidirectional transporter. Substrate transport is pH-dependent and enhanced under acidic condition, which is most likely the result of allosteric changes in the transporter structure. Implicated in monoamine neurotransmitters uptake such as serotonin, dopamine, adrenaline/epinephrine, noradrenaline/norepinephrine, histamine and tyramine, thereby supporting a role in homeostatic regulation of aminergic neurotransmission in the central nervous system. Also responsible for the uptake of bioactive amines and drugs through the blood-cerebrospinal fluid (CSF) barrier, from the CSF into choroid plexus epithelial cells, thereby playing a significant role in the clearance of cationic neurotoxins, xenobiotics and metabolic waste in the brain. Involved in bidirectional transport of the purine nucleoside adenosine and plays a role in the regulation of extracellular adenosine concentrations in cardiac tissues, in particular during ischemia. May be involved in organic cation uptake from the tubular lumen into renal tubular cells, thereby contributing to organic cation reabsorption in the kidney. Also transports guanidine. The protein is Equilibrative nucleoside transporter 4 of Homo sapiens (Human).